The following is a 436-amino-acid chain: MTTNLFSSRIIQSALDFDVYKVNMMSAVAALYPDAMVSYKFIVRSEEDLSELLPEVKAEVLKLQDITFSTEEIEYIKGVAPYLNPEFVDALHAFRFNPQRDVSFNIKTMADGTSQLRITINGLWKETILYETIIMSIVSEVRSRARWAEVPVEQFQSVLEEKVRHLKTELKRRNITNFKFADMSTRRRFSFQAQRSMLKYLSKELPDCLTGTSNYHLAKELGLTPIGTVAHEWFMGHQALVNVRDSQKVALQRWQKMFNGALGIALTDTIGIDAFLKDFDEELSNAYVGVRHDSGCPYTWGEKMIEHYQSLGIDPMTKTLVFTDGLNFEQALAICEHFQDRVQVSFGIGTSLANDMGDYANAQGIAYKPLSIVIKMVSCNGSPVAKISDEPEKAMCEDIFFLMNLKRRFEQPLDLDECRGLIDRLEDEGDNYLIDA.

His-231 bears the Phosphohistidine; by autocatalysis mark.

This sequence belongs to the NAPRTase family. In terms of processing, transiently phosphorylated on a His residue during the reaction cycle. Phosphorylation strongly increases the affinity for substrates and increases the rate of nicotinate D-ribonucleotide production. Dephosphorylation regenerates the low-affinity form of the enzyme, leading to product release.

It carries out the reaction nicotinate + 5-phospho-alpha-D-ribose 1-diphosphate + ATP + H2O = nicotinate beta-D-ribonucleotide + ADP + phosphate + diphosphate. It functions in the pathway cofactor biosynthesis; NAD(+) biosynthesis; nicotinate D-ribonucleotide from nicotinate: step 1/1. Catalyzes the synthesis of beta-nicotinate D-ribonucleotide from nicotinate and 5-phospho-D-ribose 1-phosphate at the expense of ATP. The polypeptide is Nicotinate phosphoribosyltransferase (Vibrio campbellii (strain ATCC BAA-1116)).